A 287-amino-acid chain; its full sequence is Pyridoxal kinase PdxY (287 aa).

Residues Ser-9 and 44 to 45 (TQ) each bind substrate. ATP is bound by residues Asp-111, Ala-143, Glu-148, Lys-181, and 208–211 (RPLV). Residue Asp-223 coordinates substrate.

This sequence belongs to the pyridoxine kinase family. PdxY subfamily. In terms of assembly, homodimer. Mg(2+) is required as a cofactor.

It carries out the reaction pyridoxal + ATP = pyridoxal 5'-phosphate + ADP + H(+). The protein operates within cofactor metabolism; pyridoxal 5'-phosphate salvage; pyridoxal 5'-phosphate from pyridoxal: step 1/1. Its function is as follows. Pyridoxal kinase involved in the salvage pathway of pyridoxal 5'-phosphate (PLP). Catalyzes the phosphorylation of pyridoxal to PLP. The chain is Pyridoxal kinase PdxY from Photorhabdus laumondii subsp. laumondii (strain DSM 15139 / CIP 105565 / TT01) (Photorhabdus luminescens subsp. laumondii).